We begin with the raw amino-acid sequence, 318 residues long: Ribose-phosphate pyrophosphokinase (318 aa).

Residues 46 to 48 (DGE) and 105 to 106 (RQ) each bind ATP. 2 residues coordinate Mg(2+): His-139 and Asp-178. Residue Lys-201 is part of the active site. D-ribose 5-phosphate-binding positions include Arg-203, Asp-227, and 231–235 (DTAGT).

This sequence belongs to the ribose-phosphate pyrophosphokinase family. Class I subfamily. In terms of assembly, homohexamer. Mg(2+) is required as a cofactor.

It localises to the cytoplasm. The enzyme catalyses D-ribose 5-phosphate + ATP = 5-phospho-alpha-D-ribose 1-diphosphate + AMP + H(+). It functions in the pathway metabolic intermediate biosynthesis; 5-phospho-alpha-D-ribose 1-diphosphate biosynthesis; 5-phospho-alpha-D-ribose 1-diphosphate from D-ribose 5-phosphate (route I): step 1/1. Involved in the biosynthesis of the central metabolite phospho-alpha-D-ribosyl-1-pyrophosphate (PRPP) via the transfer of pyrophosphoryl group from ATP to 1-hydroxyl of ribose-5-phosphate (Rib-5-P). This Helicobacter pylori (strain J99 / ATCC 700824) (Campylobacter pylori J99) protein is Ribose-phosphate pyrophosphokinase.